The following is a 260-amino-acid chain: Putative ATP-binding protein BAB2_1147 (260 aa).

One can recognise an ABC transporter domain in the interval 5–228 (ISFNNVVMRY…DLPYPRTEAI (224 aa)). 37–44 (GPSGCGKS) lines the ATP pocket.

The protein belongs to the ABC transporter superfamily. The complex is composed of two ATP-binding proteins (BAB2_1147), two transmembrane proteins (BAB2_1148) and a solute-binding protein (BAB2_1146).

The protein localises to the cell inner membrane. Its function is as follows. Probably part of an ABC transporter complex. Probably Responsible for energy coupling to the transport system. This chain is Putative ATP-binding protein BAB2_1147, found in Brucella abortus (strain 2308).